We begin with the raw amino-acid sequence, 886 residues long: General transcription factor 3C polypeptide 3 (886 aa).

The interval 1 to 121 (MSGFSPELID…TPEQPTAGDV (121 aa)) is disordered. N-acetylserine is present on Ser2. Residues 12–44 (LEGKISFEEFERRREERKTREKKSLQEKGKLSA) are compositionally biased toward basic and acidic residues. Residue Ser43 is modified to Phosphoserine. Over residues 53–63 (VPSSSGINSTK) the composition is skewed to polar residues. Residues 92–113 (ENEDDEEEEEEEEEEEEEEETP) show a composition bias toward acidic residues. 11 TPR repeats span residues 149–182 (LRGL…APLA), 183–216 (YEPF…NPSD), 217–250 (TEEW…EPTN), 252–284 (RYLW…LSPS), 290–323 (MQLA…HQGL), 326–361 (MEDV…EKKT), 421–454 (GDLY…ERYN), 456–489 (AVVW…APLH), 491–523 (DARI…DTLA), 733–766 (HALC…HPDE), and 811–844 (QESF…PPLV). Ser282 carries the phosphoserine modification.

In terms of assembly, part of the TFIIIC subcomplex TFIIIC2, consisting of six subunits, GTF3C1, GTF3C2, GTF3C3, GTF3C4, GTF3C5 and GTF3C6. Interacts with BRF1 and TBP.

The protein resides in the nucleus. In terms of biological role, involved in RNA polymerase III-mediated transcription. Integral, tightly associated component of the DNA-binding TFIIIC2 subcomplex that directly binds tRNA and virus-associated RNA promoters. In Homo sapiens (Human), this protein is General transcription factor 3C polypeptide 3 (GTF3C3).